The sequence spans 302 residues: RNA polymerase II holoenzyme cyclin-like subunit (302 aa).

Positions 53 to 142 (QQLIKLGKRM…LGECEFSLIS (90 aa)) constitute a Cyclin N-terminal domain.

Belongs to the cyclin family. Cyclin C subfamily. As to quaternary structure, component of the srb8-11 complex, a regulatory module of the Mediator complex.

Its subcellular location is the nucleus. Functionally, component of the srb8-11 complex. The srb8-11 complex is a regulatory module of the Mediator complex which is itself involved in regulation of basal and activated RNA polymerase II-dependent transcription. The srb8-11 complex may be involved in the transcriptional repression of a subset of genes regulated by Mediator. It may inhibit the association of the Mediator complex with RNA polymerase II to form the holoenzyme complex. The srb8-11 complex phosphorylates the C-terminal domain (CTD) of the largest subunit of RNA polymerase II. The protein is RNA polymerase II holoenzyme cyclin-like subunit (ssn8) of Aspergillus fumigatus (strain ATCC MYA-4609 / CBS 101355 / FGSC A1100 / Af293) (Neosartorya fumigata).